A 708-amino-acid polypeptide reads, in one-letter code: Tryptophan synthase (708 aa).

A tryptophan synthase alpha chain region spans residues methionine 1 to alanine 305. Residues glutamate 49 and aspartate 60 each act as proton acceptor in the active site. Residues leucine 306–phenylalanine 708 form a tryptophan synthase beta chain region. At lysine 392 the chain carries N6-(pyridoxal phosphate)lysine.

In the N-terminal section; belongs to the TrpA family. This sequence in the C-terminal section; belongs to the TrpB family. It depends on pyridoxal 5'-phosphate as a cofactor.

The catalysed reaction is (1S,2R)-1-C-(indol-3-yl)glycerol 3-phosphate + L-serine = D-glyceraldehyde 3-phosphate + L-tryptophan + H2O. The protein operates within amino-acid biosynthesis; L-tryptophan biosynthesis; L-tryptophan from chorismate: step 5/5. This is Tryptophan synthase (trp-3) from Neurospora crassa (strain ATCC 24698 / 74-OR23-1A / CBS 708.71 / DSM 1257 / FGSC 987).